The primary structure comprises 262 residues: 3-deoxy-manno-octulosonate cytidylyltransferase (262 aa).

It belongs to the KdsB family.

It localises to the cytoplasm. The catalysed reaction is 3-deoxy-alpha-D-manno-oct-2-ulosonate + CTP = CMP-3-deoxy-beta-D-manno-octulosonate + diphosphate. It functions in the pathway nucleotide-sugar biosynthesis; CMP-3-deoxy-D-manno-octulosonate biosynthesis; CMP-3-deoxy-D-manno-octulosonate from 3-deoxy-D-manno-octulosonate and CTP: step 1/1. Its pathway is bacterial outer membrane biogenesis; lipopolysaccharide biosynthesis. Its function is as follows. Activates KDO (a required 8-carbon sugar) for incorporation into bacterial lipopolysaccharide in Gram-negative bacteria. This Koribacter versatilis (strain Ellin345) protein is 3-deoxy-manno-octulosonate cytidylyltransferase.